A 615-amino-acid chain; its full sequence is 1-deoxy-D-xylulose-5-phosphate synthase (615 aa).

Residues H76 and 117 to 119 contribute to the thiamine diphosphate site; that span reads GHS. Residue D148 coordinates Mg(2+). Thiamine diphosphate is bound by residues 149–150, N177, Y284, and E365; that span reads GA. N177 serves as a coordination point for Mg(2+).

This sequence belongs to the transketolase family. DXPS subfamily. As to quaternary structure, homodimer. Mg(2+) serves as cofactor. The cofactor is thiamine diphosphate.

It catalyses the reaction D-glyceraldehyde 3-phosphate + pyruvate + H(+) = 1-deoxy-D-xylulose 5-phosphate + CO2. The protein operates within metabolic intermediate biosynthesis; 1-deoxy-D-xylulose 5-phosphate biosynthesis; 1-deoxy-D-xylulose 5-phosphate from D-glyceraldehyde 3-phosphate and pyruvate: step 1/1. Catalyzes the acyloin condensation reaction between C atoms 2 and 3 of pyruvate and glyceraldehyde 3-phosphate to yield 1-deoxy-D-xylulose-5-phosphate (DXP). The chain is 1-deoxy-D-xylulose-5-phosphate synthase from Francisella tularensis subsp. novicida (strain U112).